Consider the following 294-residue polypeptide: Ribosomal protein L11 methyltransferase (294 aa).

Positions 147, 169, 191, and 231 each coordinate S-adenosyl-L-methionine.

Belongs to the methyltransferase superfamily. PrmA family.

The protein resides in the cytoplasm. It carries out the reaction L-lysyl-[protein] + 3 S-adenosyl-L-methionine = N(6),N(6),N(6)-trimethyl-L-lysyl-[protein] + 3 S-adenosyl-L-homocysteine + 3 H(+). Functionally, methylates ribosomal protein L11. In Dichelobacter nodosus (strain VCS1703A), this protein is Ribosomal protein L11 methyltransferase.